The following is an 89-amino-acid chain: Small ribosomal subunit protein uS14A (89 aa).

The disordered stretch occupies residues 29 to 62; that stretch reads AAGDRTALAKLPRDSNPNRLRLRDQTDGRPRGYM. Residues 49–58 show a composition bias toward basic and acidic residues; it reads RLRDQTDGRP.

Belongs to the universal ribosomal protein uS14 family. As to quaternary structure, part of the 30S ribosomal subunit. Contacts proteins S3 and S10.

Its function is as follows. Binds 16S rRNA, required for the assembly of 30S particles and may also be responsible for determining the conformation of the 16S rRNA at the A site. This is Small ribosomal subunit protein uS14A from Enterococcus faecalis (strain ATCC 700802 / V583).